We begin with the raw amino-acid sequence, 63 residues long: Large ribosomal subunit protein bL32c (63 aa).

The disordered stretch occupies residues R38–G63. Polar residues predominate over residues S53 to G63.

Belongs to the bacterial ribosomal protein bL32 family.

Its subcellular location is the plastid. The protein resides in the chloroplast. This Oryza sativa (Rice) protein is Large ribosomal subunit protein bL32c (rpl32).